Consider the following 536-residue polypeptide: Formate--tetrahydrofolate ligase (536 aa).

51–58 (TAAGEGKT) contacts ATP.

This sequence belongs to the formate--tetrahydrofolate ligase family.

It carries out the reaction (6S)-5,6,7,8-tetrahydrofolate + formate + ATP = (6R)-10-formyltetrahydrofolate + ADP + phosphate. It participates in one-carbon metabolism; tetrahydrofolate interconversion. The chain is Formate--tetrahydrofolate ligase from Thermoplasma volcanium (strain ATCC 51530 / DSM 4299 / JCM 9571 / NBRC 15438 / GSS1).